The sequence spans 340 residues: Ketol-acid reductoisomerase (NADP(+)) (340 aa).

Positions 3 to 182 (VQMEYEKDVK…GAARVGLLET (180 aa)) constitute a KARI N-terminal Rossmann domain. Residues 26–29 (YGSQ), arginine 49, serine 53, and 83–86 (DEIQ) each bind NADP(+). Histidine 108 is an active-site residue. Glycine 134 serves as a coordination point for NADP(+). The region spanning 183-328 (TYKEETEEDL…AELRKAMPFV (146 aa)) is the KARI C-terminal knotted domain. Mg(2+) is bound by residues aspartate 191, glutamate 195, glutamate 227, and glutamate 231. Serine 252 contributes to the substrate binding site.

This sequence belongs to the ketol-acid reductoisomerase family. Mg(2+) is required as a cofactor.

It catalyses the reaction (2R)-2,3-dihydroxy-3-methylbutanoate + NADP(+) = (2S)-2-acetolactate + NADPH + H(+). It carries out the reaction (2R,3R)-2,3-dihydroxy-3-methylpentanoate + NADP(+) = (S)-2-ethyl-2-hydroxy-3-oxobutanoate + NADPH + H(+). It participates in amino-acid biosynthesis; L-isoleucine biosynthesis; L-isoleucine from 2-oxobutanoate: step 2/4. It functions in the pathway amino-acid biosynthesis; L-valine biosynthesis; L-valine from pyruvate: step 2/4. Its function is as follows. Involved in the biosynthesis of branched-chain amino acids (BCAA). Catalyzes an alkyl-migration followed by a ketol-acid reduction of (S)-2-acetolactate (S2AL) to yield (R)-2,3-dihydroxy-isovalerate. In the isomerase reaction, S2AL is rearranged via a Mg-dependent methyl migration to produce 3-hydroxy-3-methyl-2-ketobutyrate (HMKB). In the reductase reaction, this 2-ketoacid undergoes a metal-dependent reduction by NADPH to yield (R)-2,3-dihydroxy-isovalerate. The protein is Ketol-acid reductoisomerase (NADP(+)) of Streptococcus pneumoniae (strain JJA).